The primary structure comprises 732 residues: Catalase-peroxidase (732 aa).

Basic and acidic residues predominate over residues 1–10; the sequence is MDAKTDDKAG. The segment at 1–26 is disordered; that stretch reads MDAKTDDKAGKCPVAHGPAPRGNRDW. The tryptophyl-tyrosyl-methioninium (Trp-Tyr) (with M-243) cross-link spans 95-217; it reads WHSAGTYRTT…LGAVQMGLIY (123 aa). Residue His96 is the Proton acceptor of the active site. Residues 217 to 243 constitute a cross-link (tryptophyl-tyrosyl-methioninium (Tyr-Met) (with W-95)); sequence YVNPEGPNGNPDPLGSAKDIRETFARM. Position 258 (His258) interacts with heme b.

The protein belongs to the peroxidase family. Peroxidase/catalase subfamily. Homodimer or homotetramer. The cofactor is heme b. In terms of processing, formation of the three residue Trp-Tyr-Met cross-link is important for the catalase, but not the peroxidase activity of the enzyme.

It catalyses the reaction H2O2 + AH2 = A + 2 H2O. It carries out the reaction 2 H2O2 = O2 + 2 H2O. Its function is as follows. Bifunctional enzyme with both catalase and broad-spectrum peroxidase activity. This chain is Catalase-peroxidase, found in Rhodopseudomonas palustris (strain BisB18).